The following is a 912-amino-acid chain: Probable transmembrane GTPase FZO-like, chloroplastic (912 aa).

The transit peptide at 1–54 (MRTLISHRQCVTSPFLISAASPPFPGRCFKLSSFTPPRHRRFSSLSIRNISHES) directs the protein to the chloroplast. A disordered region spans residues 51-71 (SHESADQTSSSRPRTLYPGGY). Residues 55-773 (ADQTSSSRPR…SKRLEQDIRE (719 aa)) are Stromal-facing. GTP contacts are provided by residues 359-364 (NSGKST) and serine 521. Residues 774–794 (VFFVTVGGLGAAGLSASLLTS) form a helical membrane-spanning segment. The Chloroplast intermembrane portion of the chain corresponds to 795–801 (VLPTTLE). Residues 802 to 822 (DLLALGLCSAGGYVAIANFPY) traverse the membrane as a helical segment. Residues 823–912 (RRQAIIGKVN…LHVSRDEMRL (90 aa)) are Stromal-facing. Positions 877–904 (DRLLGIQKELSDIRSKLQLLQVDIDNLH) form a coiled coil.

This sequence belongs to the TRAFAC class dynamin-like GTPase superfamily. Dynamin/Fzo/YdjA family. Mitofusin subfamily.

The protein resides in the plastid. It is found in the chloroplast inner membrane. The protein localises to the chloroplast thylakoid membrane. Probable membrane-remodeling GTPase that plays a unique role in the in the determination of thylakoid and chloroplast morphology and regulates organization of the thylakoid network. Not involved in the determination of mitochondrial morphology or ultrastructure. In Arabidopsis thaliana (Mouse-ear cress), this protein is Probable transmembrane GTPase FZO-like, chloroplastic.